Here is a 178-residue protein sequence, read N- to C-terminus: MHRPNFRPPTPPYPSPGIGGWGGGNNFRGALGGGPRPPSPRDGYGSPHHTPPCGPRARPYGSSQSPRHGGNFSGARFGSPSPGGYPGSYSRSPAGSQHQFGYSPGQQQTYPQGSPRTSTPFGSGRGREKRMSNELESYFKPSMLEDPWAGLEPVSVVDISQQYSNTQTFTGKKGRYFS.

Over residues 1 to 15 (MHRPNFRPPTPPYPS) the composition is skewed to pro residues. The segment at 1-134 (MHRPNFRPPT…RGREKRMSNE (134 aa)) is disordered. Gly residues predominate over residues 17–34 (GIGGWGGGNNFRGALGGG). Position 36 is an asymmetric dimethylarginine (Arg-36). Phosphoserine occurs at positions 39 and 46. Thr-50 is modified (phosphothreonine). At Arg-56 the chain carries Omega-N-methylarginine. Residues Arg-58, Arg-67, and Arg-76 each carry the asymmetric dimethylarginine modification. The segment covering 78 to 96 (GSPSPGGYPGSYSRSPAGS) has biased composition (low complexity). Ser-79, Ser-81, Ser-92, Ser-103, and Ser-114 each carry phosphoserine. A compositionally biased stretch (polar residues) spans 97-121 (QHQFGYSPGQQQTYPQGSPRTSTPF). The residue at position 116 (Arg-116) is an Omega-N-methylarginine. Thr-119 is modified (phosphothreonine). Residues Ser-123 and Ser-132 each carry the phosphoserine modification.

In terms of assembly, interacts with PLK1; phosphorylation-dependent. In terms of processing, phosphorylated during mitosis in the cell cycle probably by CDK1.

It is found in the nucleus. The protein localises to the cytoplasm. The protein resides in the cytoskeleton. Its subcellular location is the microtubule organizing center. It localises to the centrosome. In terms of biological role, may play a role in maintenance of cell cycle integrity by regulating mitosis or cytokinesis. In Mus musculus (Mouse), this protein is M-phase-specific PLK1-interacting protein (Mplkip).